The chain runs to 159 residues: S-ribosylhomocysteine lyase (159 aa).

3 residues coordinate Fe cation: His53, His57, and Cys124.

This sequence belongs to the LuxS family. Homodimer. Fe cation serves as cofactor.

It carries out the reaction S-(5-deoxy-D-ribos-5-yl)-L-homocysteine = (S)-4,5-dihydroxypentane-2,3-dione + L-homocysteine. In terms of biological role, involved in the synthesis of autoinducer 2 (AI-2) which is secreted by bacteria and is used to communicate both the cell density and the metabolic potential of the environment. The regulation of gene expression in response to changes in cell density is called quorum sensing. Catalyzes the transformation of S-ribosylhomocysteine (RHC) to homocysteine (HC) and 4,5-dihydroxy-2,3-pentadione (DPD). The protein is S-ribosylhomocysteine lyase of Desulfotalea psychrophila (strain LSv54 / DSM 12343).